A 256-amino-acid polypeptide reads, in one-letter code: Small ribosomal subunit protein eS1B (256 aa).

Alanine 2 is modified (N-acetylalanine; partial).

The protein belongs to the eukaryotic ribosomal protein eS1 family. As to quaternary structure, component of the small ribosomal subunit. Mature ribosomes consist of a small (40S) and a large (60S) subunit. The 40S subunit contains about 33 different proteins and 1 molecule of RNA (18S). The 60S subunit contains about 49 different proteins and 3 molecules of RNA (25S, 5.8S and 5S).

It localises to the cytoplasm. This Scheffersomyces stipitis (strain ATCC 58785 / CBS 6054 / NBRC 10063 / NRRL Y-11545) (Yeast) protein is Small ribosomal subunit protein eS1B.